Consider the following 225-residue polypeptide: UPF0758 protein Swoo_4561 (225 aa).

One can recognise an MPN domain in the interval 102–224 (ILSDPDLTRD…IVSFAERGWI (123 aa)). The Zn(2+) site is built by H173, H175, and D186. The JAMM motif motif lies at 173-186 (HNHPSGVAEPSHAD).

This sequence belongs to the UPF0758 family.

The chain is UPF0758 protein Swoo_4561 from Shewanella woodyi (strain ATCC 51908 / MS32).